A 100-amino-acid chain; its full sequence is MMKRLMAILTAIMPAIAMAAEGEASVAKGLLYLGAGLAIGLAGLGAGVGMGHAVRGTQEGVARNPNAGGRLQTLMFIGLAFIETIALYGLLIAFILLFVV.

A run of 2 helical transmembrane segments spans residues 30 to 50 (LLYL…GVGM) and 80 to 100 (AFIE…LFVV).

Belongs to the ATPase C chain family. F-type ATPases have 2 components, F(1) - the catalytic core - and F(0) - the membrane proton channel. F(1) has five subunits: alpha(3), beta(3), gamma(1), delta(1), epsilon(1). F(0) has three main subunits: a(1), b(2) and c(10-14). The alpha and beta chains form an alternating ring which encloses part of the gamma chain. F(1) is attached to F(0) by a central stalk formed by the gamma and epsilon chains, while a peripheral stalk is formed by the delta and b chains.

The protein localises to the cell inner membrane. F(1)F(0) ATP synthase produces ATP from ADP in the presence of a proton or sodium gradient. F-type ATPases consist of two structural domains, F(1) containing the extramembraneous catalytic core and F(0) containing the membrane proton channel, linked together by a central stalk and a peripheral stalk. During catalysis, ATP synthesis in the catalytic domain of F(1) is coupled via a rotary mechanism of the central stalk subunits to proton translocation. Its function is as follows. Key component of the F(0) channel; it plays a direct role in translocation across the membrane. A homomeric c-ring of between 10-14 subunits forms the central stalk rotor element with the F(1) delta and epsilon subunits. This chain is ATP synthase subunit c, found in Aquifex aeolicus (strain VF5).